A 282-amino-acid chain; its full sequence is Bifunctional protein FolD (282 aa).

Residues 165–167 (GRS), S190, and T231 each bind NADP(+).

Belongs to the tetrahydrofolate dehydrogenase/cyclohydrolase family. Homodimer.

It carries out the reaction (6R)-5,10-methylene-5,6,7,8-tetrahydrofolate + NADP(+) = (6R)-5,10-methenyltetrahydrofolate + NADPH. It catalyses the reaction (6R)-5,10-methenyltetrahydrofolate + H2O = (6R)-10-formyltetrahydrofolate + H(+). Its pathway is one-carbon metabolism; tetrahydrofolate interconversion. Its function is as follows. Catalyzes the oxidation of 5,10-methylenetetrahydrofolate to 5,10-methenyltetrahydrofolate and then the hydrolysis of 5,10-methenyltetrahydrofolate to 10-formyltetrahydrofolate. This chain is Bifunctional protein FolD, found in Clostridium beijerinckii (strain ATCC 51743 / NCIMB 8052) (Clostridium acetobutylicum).